The chain runs to 84 residues: MAQTQSPLQWLATTLIRGYQIFISPILGPRCRFNPTCSHYAIEAIKVHGTAKGCWFALKRILKCHPLHPGGSDPVPPKNDRCNK.

The protein belongs to the UPF0161 family.

It localises to the cell inner membrane. Could be involved in insertion of integral membrane proteins into the membrane. This is Putative membrane protein insertion efficiency factor from Shewanella oneidensis (strain ATCC 700550 / JCM 31522 / CIP 106686 / LMG 19005 / NCIMB 14063 / MR-1).